The following is a 199-amino-acid chain: Elongation factor Ts (199 aa).

Positions 81 to 84 (TDFV) are involved in Mg(2+) ion dislocation from EF-Tu.

This sequence belongs to the EF-Ts family.

It localises to the cytoplasm. In terms of biological role, associates with the EF-Tu.GDP complex and induces the exchange of GDP to GTP. It remains bound to the aminoacyl-tRNA.EF-Tu.GTP complex up to the GTP hydrolysis stage on the ribosome. The protein is Elongation factor Ts of Thermotoga petrophila (strain ATCC BAA-488 / DSM 13995 / JCM 10881 / RKU-1).